A 280-amino-acid chain; its full sequence is Phosphatidylglycerol--prolipoprotein diacylglyceryl transferase (280 aa).

4 helical membrane-spanning segments follow: residues 23 to 43 (LRWY…LAGV), 58 to 78 (LLFW…VLFY), 93 to 113 (IWTG…ALWW), and 120 to 140 (CTFL…LGAG). Arg-141 is an a 1,2-diacyl-sn-glycero-3-phospho-(1'-sn-glycerol) binding site. A run of 3 helical transmembrane segments spans residues 173–193 (PSQL…LWLY), 200–220 (IGAV…FVEF), and 241–261 (QGQI…VWAV).

This sequence belongs to the Lgt family.

The protein resides in the cell inner membrane. It carries out the reaction L-cysteinyl-[prolipoprotein] + a 1,2-diacyl-sn-glycero-3-phospho-(1'-sn-glycerol) = an S-1,2-diacyl-sn-glyceryl-L-cysteinyl-[prolipoprotein] + sn-glycerol 1-phosphate + H(+). The protein operates within protein modification; lipoprotein biosynthesis (diacylglyceryl transfer). Its function is as follows. Catalyzes the transfer of the diacylglyceryl group from phosphatidylglycerol to the sulfhydryl group of the N-terminal cysteine of a prolipoprotein, the first step in the formation of mature lipoproteins. This Pseudoalteromonas atlantica (strain T6c / ATCC BAA-1087) protein is Phosphatidylglycerol--prolipoprotein diacylglyceryl transferase.